A 329-amino-acid chain; its full sequence is Cytochrome f (329 aa).

Positions 1-44 are cleaved as a signal peptide; the sequence is MKRNIIFLVIHQFENLTMKKKQNIFFIFLLTVFFNFTVNSNVSA. Heme-binding residues include Tyr-45, Cys-65, Cys-68, and His-69. The helical transmembrane segment at 295-315 threads the bilayer; it reads VQGLIIFLITIFITQLFLVLK.

Belongs to the cytochrome f family. The 4 large subunits of the cytochrome b6-f complex are cytochrome b6, subunit IV (17 kDa polypeptide, petD), cytochrome f and the Rieske protein, while the 4 small subunits are PetG, PetL, PetM and PetN. The complex functions as a dimer. Heme serves as cofactor.

Its subcellular location is the plastid. It localises to the chloroplast thylakoid membrane. Component of the cytochrome b6-f complex, which mediates electron transfer between photosystem II (PSII) and photosystem I (PSI), cyclic electron flow around PSI, and state transitions. This Tupiella akineta (Green alga) protein is Cytochrome f.